The primary structure comprises 40 residues: Photosystem II reaction center protein J (40 aa).

Residues 8–28 (IPLWIIGTVTGLLVIGLIGIF) traverse the membrane as a helical segment.

This sequence belongs to the PsbJ family. PSII is composed of 1 copy each of membrane proteins PsbA, PsbB, PsbC, PsbD, PsbE, PsbF, PsbH, PsbI, PsbJ, PsbK, PsbL, PsbM, PsbT, PsbX, PsbY, PsbZ, Psb30/Ycf12, at least 3 peripheral proteins of the oxygen-evolving complex and a large number of cofactors. It forms dimeric complexes.

It is found in the plastid. It localises to the chloroplast thylakoid membrane. One of the components of the core complex of photosystem II (PSII). PSII is a light-driven water:plastoquinone oxidoreductase that uses light energy to abstract electrons from H(2)O, generating O(2) and a proton gradient subsequently used for ATP formation. It consists of a core antenna complex that captures photons, and an electron transfer chain that converts photonic excitation into a charge separation. In Ipomoea purpurea (Common morning glory), this protein is Photosystem II reaction center protein J.